Consider the following 263-residue polypeptide: Protein phosphatase type 2A regulatory subunit RTS3 (263 aa).

Disordered regions lie at residues 1–62 (MIAT…AQRR) and 149–176 (LPLTPKDSMTHISHSARRSSRNASISNG). Residues 46-61 (LSTSSSPSSSPMSAQR) are compositionally biased toward low complexity. Phosphoserine is present on residues Ser172, Ser192, Ser214, and Ser238.

The protein resides in the cytoplasm. Its subcellular location is the nucleus. Its function is as follows. May be a component of a protein phosphatase type 2A (PP2A) complex. Negatively regulates SIT4 phosphatase, a modulators of caffeine sensitivity. The protein is Protein phosphatase type 2A regulatory subunit RTS3 (RTS3) of Saccharomyces cerevisiae (strain ATCC 204508 / S288c) (Baker's yeast).